Consider the following 367-residue polypeptide: Chorismate synthase (367 aa).

Position 48 (R48) interacts with NADP(+). Residues 125–127, G290, 305–309, and R333 contribute to the FMN site; these read RAS and KPTSS.

Belongs to the chorismate synthase family. Homotetramer. Requires FMNH2 as cofactor.

The catalysed reaction is 5-O-(1-carboxyvinyl)-3-phosphoshikimate = chorismate + phosphate. Its pathway is metabolic intermediate biosynthesis; chorismate biosynthesis; chorismate from D-erythrose 4-phosphate and phosphoenolpyruvate: step 7/7. Functionally, catalyzes the anti-1,4-elimination of the C-3 phosphate and the C-6 proR hydrogen from 5-enolpyruvylshikimate-3-phosphate (EPSP) to yield chorismate, which is the branch point compound that serves as the starting substrate for the three terminal pathways of aromatic amino acid biosynthesis. This reaction introduces a second double bond into the aromatic ring system. In Protochlamydia amoebophila (strain UWE25), this protein is Chorismate synthase.